We begin with the raw amino-acid sequence, 246 residues long: Envelope glycoprotein L (246 aa).

A signal peptide spans 1 to 19; it reads MKTNIFFIFLISILNQIYA. The gL betaherpesvirus-type domain occupies 29 to 235; that stretch reads LEQECIKNIL…EKYNEVLPFR (207 aa). Cysteines 134 and 139 form a disulfide.

This sequence belongs to the herpesviridae glycoprotein L (gL) family. Betaherpesvirinae gL subfamily. Interacts with glycoprotein H (gH); this interaction is necessary for the correct processing and cell surface expression of gH.

The protein resides in the virion membrane. Its subcellular location is the host cell membrane. It is found in the host Golgi apparatus. It localises to the host trans-Golgi network. Functionally, the heterodimer glycoprotein H-glycoprotein L is required for the fusion of viral and plasma membranes leading to virus entry into the host cell. Acts as a functional inhibitor of gH and maintains gH in an inhibited form. Upon binding to host integrins, gL dissociates from gH leading to activation of the viral fusion glycoproteins gB and gH. This is Envelope glycoprotein L from Homo sapiens (Human).